A 416-amino-acid chain; its full sequence is Cysteate synthase (416 aa).

K104 is subject to N6-(pyridoxal phosphate)lysine. Residue N130 coordinates pyridoxal 5'-phosphate.

It belongs to the threonine synthase family. Cysteate synthase subfamily. Homotrimer. It depends on pyridoxal 5'-phosphate as a cofactor.

It catalyses the reaction O-phospho-L-serine + sulfite + H(+) = L-cysteate + phosphate. It participates in cofactor biosynthesis; coenzyme M biosynthesis. In terms of biological role, specifically catalyzes the beta-elimination of phosphate from L-phosphoserine and the beta-addition of sulfite to the dehydroalanine intermediate to produce L-cysteate. The chain is Cysteate synthase from Methanosarcina barkeri (strain Fusaro / DSM 804).